Consider the following 521-residue polypeptide: Vascular endothelial zinc finger 1 (521 aa).

The C2H2-type 1 zinc-finger motif lies at 74–96 (FVCTYCSKAFRDSYHLRRHESCH). The segment covering 140–155 (TTSSSGTNPSSSASTT) has biased composition (low complexity). The tract at residues 140 to 167 (TTSSSGTNPSSSASTTAMPVTQSVKKPS) is disordered. C2H2-type zinc fingers lie at residues 174 to 196 (HACE…KLSH), 202 to 224 (FECP…VRSH), 232 to 255 (YTCS…KHVH), 261 to 283 (FKCQ…MVRH), and 287 to 308 (VSCN…LKTH). Residue K362 is modified to N6-acetyllysine. 4 repeat units span residues 394–400 (PVTLTTP), 445–451 (PVTITSP), 457–463 (PLTLTTP), and 479–485 (PVTITSP). The tract at residues 394 to 485 (PVTLTTPFSI…IAHPVTITSP (92 aa)) is 4 X 7 AA repeats of P-[LV]-T-[IL]-T-[ST]-P.

It belongs to the krueppel C2H2-type zinc-finger protein family. Interacts with ARHGAP22. As to expression, ubiquitously expressed. Highest levels in skeletal muscle and kidney.

It localises to the nucleus. Its function is as follows. Possible transcription factor. Specifically binds to the CT/GC-rich region of the interleukin-3 promoter and mediates tax transactivation of IL-3. The polypeptide is Vascular endothelial zinc finger 1 (VEZF1) (Homo sapiens (Human)).